Consider the following 397-residue polypeptide: Cercosporin biosynthesis regulatory protein CTB8 (397 aa).

Residues cysteine 26–cysteine 53 constitute a DNA-binding region (zn(2)-C6 fungal-type). 2 disordered regions span residues glycine 62–lysine 92 and alanine 173–histidine 198. The span at proline 74–proline 87 shows a compositional bias: polar residues. The segment covering proline 179–threonine 197 has biased composition (low complexity).

It is found in the nucleus. Transcription regulator of the gene cluster that mediates the biosynthesis of cercosporin, a light-activated, non-host-selective toxin. The perylenequinone chromophore of cercosporin absorbs light energy to attain an electronically-activated triplet state and produces active oxygen species such as the hydroxyl radical, superoxide, hydrogen peroxide or singlet oxygen upon reaction with oxygen molecules. These reactive oxygen species cause damage to various cellular components including lipids, proteins and nucleic acids. This is Cercosporin biosynthesis regulatory protein CTB8 from Cercospora nicotianae (Barn spot disease fungus).